We begin with the raw amino-acid sequence, 267 residues long: NH(3)-dependent NAD(+) synthetase (267 aa).

38–45 (GISGGVDS) provides a ligand contact to ATP. Asp-44 lines the Mg(2+) pocket. Residue Arg-123 participates in deamido-NAD(+) binding. An ATP-binding site is contributed by Thr-143. Residue Glu-148 coordinates Mg(2+). Positions 156 and 163 each coordinate deamido-NAD(+). Residues Lys-172 and Ser-193 each coordinate ATP. 250-251 (HK) is a deamido-NAD(+) binding site.

It belongs to the NAD synthetase family. Homodimer.

It catalyses the reaction deamido-NAD(+) + NH4(+) + ATP = AMP + diphosphate + NAD(+) + H(+). It participates in cofactor biosynthesis; NAD(+) biosynthesis; NAD(+) from deamido-NAD(+) (ammonia route): step 1/1. In terms of biological role, catalyzes the ATP-dependent amidation of deamido-NAD to form NAD. Uses ammonia as a nitrogen source. The chain is NH(3)-dependent NAD(+) synthetase from Pyrobaculum aerophilum (strain ATCC 51768 / DSM 7523 / JCM 9630 / CIP 104966 / NBRC 100827 / IM2).